The following is a 299-amino-acid chain: Putative peptidyl-prolyl cis-trans isomerase HP_0175 (299 aa).

The first 21 residues, 1–21 (MKKNILNLALVGALSTSFLMA), serve as a signal peptide directing secretion. A PpiC domain is found at 154 to 253 (KQEAHARHIL…FGYHIIYLIS (100 aa)).

It catalyses the reaction [protein]-peptidylproline (omega=180) = [protein]-peptidylproline (omega=0). The sequence is that of Putative peptidyl-prolyl cis-trans isomerase HP_0175 from Helicobacter pylori (strain ATCC 700392 / 26695) (Campylobacter pylori).